Here is a 511-residue protein sequence, read N- to C-terminus: Bifunctional purine biosynthesis protein PurH (511 aa).

In terms of domain architecture, MGS-like spans M1–V145.

It belongs to the PurH family.

It carries out the reaction (6R)-10-formyltetrahydrofolate + 5-amino-1-(5-phospho-beta-D-ribosyl)imidazole-4-carboxamide = 5-formamido-1-(5-phospho-D-ribosyl)imidazole-4-carboxamide + (6S)-5,6,7,8-tetrahydrofolate. The catalysed reaction is IMP + H2O = 5-formamido-1-(5-phospho-D-ribosyl)imidazole-4-carboxamide. The protein operates within purine metabolism; IMP biosynthesis via de novo pathway; 5-formamido-1-(5-phospho-D-ribosyl)imidazole-4-carboxamide from 5-amino-1-(5-phospho-D-ribosyl)imidazole-4-carboxamide (10-formyl THF route): step 1/1. It participates in purine metabolism; IMP biosynthesis via de novo pathway; IMP from 5-formamido-1-(5-phospho-D-ribosyl)imidazole-4-carboxamide: step 1/1. This Anoxybacillus flavithermus (strain DSM 21510 / WK1) protein is Bifunctional purine biosynthesis protein PurH.